A 147-amino-acid polypeptide reads, in one-letter code: MFYQLRVAREKDGDVLEAFLKQAKTSYEGVKEGFTQFLMLEDSEKNIAGCLGIEKISCDQGLLRSLVISDKLHQGHIVTLFQSMEVLCEKHQIKTVYLVANQHSSADFLTAMGFERAESVPEELFSSDHFCESRQTEGAVLMKKASG.

This is an uncharacterized protein from Bacillus subtilis (strain 168).